Consider the following 142-residue polypeptide: MAP3K7 C-terminal-like protein (142 aa).

In terms of tissue distribution, ubiquitous.

The protein is MAP3K7 C-terminal-like protein (Map3k7cl) of Mus musculus (Mouse).